Here is a 566-residue protein sequence, read N- to C-terminus: Bifunctional NADP phosphatase/NAD kinase (566 aa).

The segment at 1-283 (MDMLEMALNI…KLVGIFGNRW (283 aa)) is NADP phosphatase. Glu-66, Asp-85, Val-87, Asp-88, and Asp-229 together coordinate Mg(2+). Positions 275–566 (LVGIFGNRWR…YNKLKKLSLM (292 aa)) are NAD kinase. Residue Asp-355 is the Proton acceptor of the active site. NAD(+) contacts are provided by residues 355 to 356 (DG), Arg-360, 430 to 431 (NE), Lys-441, Arg-458, Asp-460, 471 to 476 (TAYSLS), and Asn-528.

This sequence in the N-terminal section; belongs to the inositol monophosphatase superfamily. It in the C-terminal section; belongs to the NAD kinase family. Homotetramer. Mg(2+) is required as a cofactor.

The protein resides in the cytoplasm. It carries out the reaction NAD(+) + ATP = ADP + NADP(+) + H(+). The catalysed reaction is NADP(+) + H2O = phosphate + NAD(+). Its function is as follows. Involved in the regulation of the intracellular balance between NAD(H) and NADP(H), and is a key enzyme in the biosynthesis of NADP. Catalyzes the phosphorylation and dephosphorylation of NAD and NADP, respectively. Although it shows conflicting dual activities and is able to supply NADP, it seems that its physiological role is to prevent excess accumulation of NADP. The protein is Bifunctional NADP phosphatase/NAD kinase of Methanococcus maripaludis (strain DSM 14266 / JCM 13030 / NBRC 101832 / S2 / LL).